We begin with the raw amino-acid sequence, 152 residues long: Ribosome maturation factor RimP (152 aa).

This sequence belongs to the RimP family.

The protein localises to the cytoplasm. In terms of biological role, required for maturation of 30S ribosomal subunits. The polypeptide is Ribosome maturation factor RimP (Porphyromonas gingivalis (strain ATCC 33277 / DSM 20709 / CIP 103683 / JCM 12257 / NCTC 11834 / 2561)).